A 315-amino-acid polypeptide reads, in one-letter code: ADP-L-glycero-D-manno-heptose-6-epimerase (315 aa).

NADP(+) is bound by residues phenylalanine 10 to isoleucine 11, aspartate 31 to aspartate 32, lysine 38, lysine 53, glutamine 76 to serine 80, and asparagine 93. Tyrosine 140 serves as the catalytic Proton acceptor. An NADP(+)-binding site is contributed by lysine 144. Asparagine 169 contributes to the substrate binding site. NADP(+)-binding residues include valine 170 and lysine 178. Catalysis depends on lysine 178, which acts as the Proton acceptor. Substrate contacts are provided by residues serine 180, histidine 187, phenylalanine 201 to cysteine 204, arginine 214, and tyrosine 278.

It belongs to the NAD(P)-dependent epimerase/dehydratase family. HldD subfamily. In terms of assembly, homopentamer. It depends on NADP(+) as a cofactor.

It carries out the reaction ADP-D-glycero-beta-D-manno-heptose = ADP-L-glycero-beta-D-manno-heptose. Its pathway is nucleotide-sugar biosynthesis; ADP-L-glycero-beta-D-manno-heptose biosynthesis; ADP-L-glycero-beta-D-manno-heptose from D-glycero-beta-D-manno-heptose 7-phosphate: step 4/4. Catalyzes the interconversion between ADP-D-glycero-beta-D-manno-heptose and ADP-L-glycero-beta-D-manno-heptose via an epimerization at carbon 6 of the heptose. This Syntrophotalea carbinolica (strain DSM 2380 / NBRC 103641 / GraBd1) (Pelobacter carbinolicus) protein is ADP-L-glycero-D-manno-heptose-6-epimerase.